The chain runs to 201 residues: MQTSPLLTQLMEALRCLPGVGPKSAQRMAFTLLQRDRSGGMRLAQALTRAMSEIGHCADCRTFTEQDVCNICSNPRRQENGQICVVESPADIYAIEQTGQFSGRYFVLMGHLSPLDGIGPDDIGLDRLEQRLASEQLSEVILATNPTVEGEATANYIAELCAQYGVEASRIAHGVPVGGELEMVDGTTLSHSLAGRHKIRF.

The segment at 57 to 72 adopts a C4-type zinc-finger fold; sequence CADCRTFTEQDVCNIC. Residues 81-176 form the Toprim domain; it reads GQICVVESPA…EASRIAHGVP (96 aa).

Belongs to the RecR family.

Its function is as follows. May play a role in DNA repair. It seems to be involved in an RecBC-independent recombinational process of DNA repair. It may act with RecF and RecO. The polypeptide is Recombination protein RecR (Citrobacter koseri (strain ATCC BAA-895 / CDC 4225-83 / SGSC4696)).